Consider the following 540-residue polypeptide: Eukaryotic translation initiation factor 3 subunit L (540 aa).

The 209-residue stretch at 307–515 (TFSDILLYIQ…IHIADTKVSH (209 aa)) folds into the PCI domain.

The protein belongs to the eIF-3 subunit L family. Component of the eukaryotic translation initiation factor 3 (eIF-3) complex. The eIF-3 complex interacts with pix.

It is found in the cytoplasm. Its function is as follows. Component of the eukaryotic translation initiation factor 3 (eIF-3) complex, which is involved in protein synthesis of a specialized repertoire of mRNAs and, together with other initiation factors, stimulates binding of mRNA and methionyl-tRNAi to the 40S ribosome. The eIF-3 complex specifically targets and initiates translation of a subset of mRNAs involved in cell proliferation. The protein is Eukaryotic translation initiation factor 3 subunit L of Drosophila grimshawi (Hawaiian fruit fly).